The chain runs to 227 residues: Ribonuclease 3 (227 aa).

The region spanning 4 to 133 (FEKLEKLLSY…LIAAIYLDSN (130 aa)) is the RNase III domain. Position 46 (Glu46) interacts with Mg(2+). Asp50 is an active-site residue. 2 residues coordinate Mg(2+): Asn119 and Glu122. Residue Glu122 is part of the active site. The DRBM domain maps to 158–226 (DPKTALQEWA…ARSLLHRLKN (69 aa)).

It belongs to the ribonuclease III family. As to quaternary structure, homodimer. The cofactor is Mg(2+).

It is found in the cytoplasm. It carries out the reaction Endonucleolytic cleavage to 5'-phosphomonoester.. Its function is as follows. Digests double-stranded RNA. Involved in the processing of primary rRNA transcript to yield the immediate precursors to the large and small rRNAs (23S and 16S). Processes some mRNAs, and tRNAs when they are encoded in the rRNA operon. Processes pre-crRNA and tracrRNA of type II CRISPR loci if present in the organism. The chain is Ribonuclease 3 from Rickettsia africae (strain ESF-5).